A 20-amino-acid polypeptide reads, in one-letter code: Octopamine receptor (20 aa).

Belongs to the G-protein coupled receptor 1 family.

It is found in the cell membrane. Its function is as follows. Putative receptor for octopamine. Octopamine (OA) is a neurotransmitter, neurohormone, and neuromodulator in invertebrates. The activity of this receptor is mediated by G proteins which activate adenylyl cyclase. This is Octopamine receptor from Photinus pyralis (Common eastern firefly).